The following is a 161-amino-acid chain: Large ribosomal subunit protein uL23m (161 aa).

A mitochondrion-targeting transit peptide spans 1-34 (MSKIAGKRLVYFPNITFTLCRGLNLQPKFAVFRV).

Belongs to the universal ribosomal protein uL23 family. As to quaternary structure, component of the mitochondrial large ribosomal subunit (mt-LSU). Mature yeast 74S mitochondrial ribosomes consist of a small (37S) and a large (54S) subunit. The 37S small subunit contains a 15S ribosomal RNA (15S mt-rRNA) and at least 32 different proteins. The 54S large subunit contains a 21S rRNA (21S mt-rRNA) and at least 45 different proteins. uL23m forms the wall of the exit tunnel. Interacts with the C-terminus of OXA1.

It localises to the mitochondrion. Component of the mitochondrial ribosome (mitoribosome), a dedicated translation machinery responsible for the synthesis of mitochondrial genome-encoded proteins, including at least some of the essential transmembrane subunits of the mitochondrial respiratory chain. The mitoribosomes are attached to the mitochondrial inner membrane and translation products are cotranslationally integrated into the membrane. The chain is Large ribosomal subunit protein uL23m (mrp20) from Schizosaccharomyces pombe (strain 972 / ATCC 24843) (Fission yeast).